A 306-amino-acid polypeptide reads, in one-letter code: Curved DNA-binding protein (306 aa).

A J domain is found at 5-69 (DYYAIMGVKP…QRRAEYDQLW (65 aa)).

It is found in the cytoplasm. The protein resides in the nucleoid. Functionally, DNA-binding protein that preferentially recognizes a curved DNA sequence. It is probably a functional analog of DnaJ; displays overlapping activities with DnaJ, but functions under different conditions, probably acting as a molecular chaperone in an adaptive response to environmental stresses other than heat shock. Lacks autonomous chaperone activity; binds native substrates and targets them for recognition by DnaK. Its activity is inhibited by the binding of CbpM. The polypeptide is Curved DNA-binding protein (Salmonella choleraesuis (strain SC-B67)).